A 110-amino-acid polypeptide reads, in one-letter code: MSADYPTFKEALEKFKNLESDTAGKDKFNWVFTLENIKSAADVNLASKGLVQLYALQEIDKKINNLTTQVSKLPTTSGSSSAGAIVPAGSNTQGQYKAPPKKGIKRKYPA.

Residues 72 to 82 (KLPTTSGSSSA) are compositionally biased toward polar residues. Residues 72–110 (KLPTTSGSSSAGAIVPAGSNTQGQYKAPPKKGIKRKYPA) form a disordered region. Residues 99-110 (PPKKGIKRKYPA) show a composition bias toward basic residues.

This is Protein P2 from Oryza sativa (Rice).